A 294-amino-acid chain; its full sequence is Pyridoxal 5'-phosphate synthase subunit PdxS (294 aa).

Aspartate 24 provides a ligand contact to D-ribose 5-phosphate. Lysine 81 functions as the Schiff-base intermediate with D-ribose 5-phosphate in the catalytic mechanism. Glycine 153 lines the D-ribose 5-phosphate pocket. Residue arginine 165 coordinates D-glyceraldehyde 3-phosphate. D-ribose 5-phosphate is bound by residues glycine 214 and 235-236 (GS).

This sequence belongs to the PdxS/SNZ family. In the presence of PdxT, forms a dodecamer of heterodimers.

It catalyses the reaction aldehydo-D-ribose 5-phosphate + D-glyceraldehyde 3-phosphate + L-glutamine = pyridoxal 5'-phosphate + L-glutamate + phosphate + 3 H2O + H(+). Its pathway is cofactor biosynthesis; pyridoxal 5'-phosphate biosynthesis. Catalyzes the formation of pyridoxal 5'-phosphate from ribose 5-phosphate (RBP), glyceraldehyde 3-phosphate (G3P) and ammonia. The ammonia is provided by the PdxT subunit. Can also use ribulose 5-phosphate and dihydroxyacetone phosphate as substrates, resulting from enzyme-catalyzed isomerization of RBP and G3P, respectively. The protein is Pyridoxal 5'-phosphate synthase subunit PdxS of Geobacillus thermodenitrificans (strain NG80-2).